A 205-amino-acid chain; its full sequence is Large ribosomal subunit protein bL25A (205 aa).

It belongs to the bacterial ribosomal protein bL25 family. CTC subfamily. Part of the 50S ribosomal subunit; part of the 5S rRNA/L5/L18/L25 subcomplex. Contacts the 5S rRNA. Binds to the 5S rRNA independently of L5 and L18.

In terms of biological role, this is one of the proteins that binds to the 5S RNA in the ribosome where it forms part of the central protuberance. This Symbiobacterium thermophilum (strain DSM 24528 / JCM 14929 / IAM 14863 / T) protein is Large ribosomal subunit protein bL25A.